Reading from the N-terminus, the 483-residue chain is Coagulation factor X isoform 1 (483 aa).

The N-terminal stretch at 1 to 20 (MAPQLLLCLILTFLWSLPEA) is a signal peptide. The propeptide occupies 21 to 40 (ESNVFLKSKVANRFLQRTKR). The 46-residue stretch at 41–86 (ANSLFEEFKSGNIERECIEERCSKEEAREAFEDDEKTETFWNVYVD) folds into the Gla domain. A 4-carboxyglutamate mark is found at Glu46, Glu47, Glu54, Glu56, Glu59, Glu60, Glu65, Glu66, Glu69, Glu72, and Glu75. An intrachain disulfide couples Cys57 to Cys62. An EGF-like 1; calcium-binding domain is found at 86-122 (DGDQCSSNPCHYGGTCKDGIGSYTCTCLSGYEGKNCE). 11 disulfide bridges follow: Cys90–Cys101, Cys95–Cys110, Cys112–Cys121, Cys129–Cys140, Cys136–Cys149, Cys151–Cys164, Cys172–Cys345, Cys245–Cys250, Cys265–Cys281, Cys393–Cys407, and Cys418–Cys446. The O-linked (Hex...) serine glycan is linked to Ser92. Asp103 is subject to (3R)-3-hydroxyaspartate. The 41-residue stretch at 125–165 (LYKSCRVDNGDCWHFCKPVQNGIQCSCAESYLLGEDGHSCV) folds into the EGF-like 2 domain. The propeptide at 183 to 238 (EANLPDFQTDFSDDYDEIDENNFVETPTNFSGLVLTVQSQNATLLKKSDNPSPDIR) is activation peptide. The Peptidase S1 domain occupies 239–470 (VVNGTDCKLG…FILWIKRIIR (232 aa)). The active-site Charge relay system is His280. An N-linked (GlcNAc...) asparagine glycan is attached at Asn283. The active-site Charge relay system is the Asp325. Ser422 functions as the Charge relay system in the catalytic mechanism.

The protein belongs to the peptidase S1 family. As to quaternary structure, heterodimer of a light chain and a heavy chain; disulfide-linked. Gamma-carboxyglutamate residues are formed by vitamin K dependent carboxylation. These residues are essential for the binding of calcium. Post-translationally, the activation peptide is cleaved by factor IXa (in the intrinsic pathway), or by factor VIIa (in the extrinsic pathway). In terms of processing, the iron and 2-oxoglutarate dependent 3-hydroxylation of aspartate and asparagine is (R) stereospecific within EGF domains. Plasma; synthesized in the liver.

The protein resides in the secreted. It catalyses the reaction Selective cleavage of Arg-|-Thr and then Arg-|-Ile bonds in prothrombin to form thrombin.. Functionally, factor Xa is a vitamin K-dependent glycoprotein that converts prothrombin to thrombin in the presence of factor Va, calcium and phospholipid during blood clotting. The protein is Coagulation factor X isoform 1 (F10) of Pseudonaja textilis (Eastern brown snake).